Reading from the N-terminus, the 398-residue chain is F-box/kelch-repeat protein At1g30090 (398 aa).

An F-box domain is found at 51 to 98; it reads EPLIPGLPDDVALNCLLRVPVQSHVSSKSVCKRWHLLFGTKETFFAKR. Kelch repeat units follow at residues 106-152, 159-207, 209-255, 257-304, and 305-346; these read PWLF…FRSV, TMFV…VIDG, IYAA…VLNG, LLVT…IYDR, and LFIV…AVNC.

This is F-box/kelch-repeat protein At1g30090 from Arabidopsis thaliana (Mouse-ear cress).